We begin with the raw amino-acid sequence, 155 residues long: SsrA-binding protein (155 aa).

The protein belongs to the SmpB family.

The protein localises to the cytoplasm. Required for rescue of stalled ribosomes mediated by trans-translation. Binds to transfer-messenger RNA (tmRNA), required for stable association of tmRNA with ribosomes. tmRNA and SmpB together mimic tRNA shape, replacing the anticodon stem-loop with SmpB. tmRNA is encoded by the ssrA gene; the 2 termini fold to resemble tRNA(Ala) and it encodes a 'tag peptide', a short internal open reading frame. During trans-translation Ala-aminoacylated tmRNA acts like a tRNA, entering the A-site of stalled ribosomes, displacing the stalled mRNA. The ribosome then switches to translate the ORF on the tmRNA; the nascent peptide is terminated with the 'tag peptide' encoded by the tmRNA and targeted for degradation. The ribosome is freed to recommence translation, which seems to be the essential function of trans-translation. This Streptococcus agalactiae serotype Ia (strain ATCC 27591 / A909 / CDC SS700) protein is SsrA-binding protein.